The chain runs to 159 residues: Putative polyketide cyclase (159 aa).

The protein to polyketide cyclases.

Its function is as follows. Involved in developmentally regulated synthesis of a compound biosynthetically related to polyketide antibiotics which is essential for spore color in Streptomyces coelicolor. This Streptomyces coelicolor (strain ATCC BAA-471 / A3(2) / M145) protein is Putative polyketide cyclase.